The primary structure comprises 212 residues: MKKAMLGKKIGMTQIFDENGLVIPVTVVEAGPLTVVQKKTVETDGYDAIKVGYVKVAEKKLSKPNLGQFSKTKLAPMKHLKEFRLEDISGFEVGQEIKAENMFQSGDKIDVSGVSKGKGFQGVTKRYGQRTGPNTHGSMYHRRIGSMGSGTNPGRVFKGKKLPGHMGRETITVQNLEVVRVDSDRNLILIKGAIPGPKGGLLVIKNTVKSGK.

This sequence belongs to the universal ribosomal protein uL3 family. Part of the 50S ribosomal subunit. Forms a cluster with proteins L14 and L19.

In terms of biological role, one of the primary rRNA binding proteins, it binds directly near the 3'-end of the 23S rRNA, where it nucleates assembly of the 50S subunit. The sequence is that of Large ribosomal subunit protein uL3 from Ruminiclostridium cellulolyticum (strain ATCC 35319 / DSM 5812 / JCM 6584 / H10) (Clostridium cellulolyticum).